Here is a 145-residue protein sequence, read N- to C-terminus: Transcriptional regulator SlyA (145 aa).

Residues 2 to 135 (ELPLGSDLAR…LALLVSRLEK (134 aa)) form the HTH marR-type domain. Positions 49–72 (QIQLAKAIGIEQPSLVRTLDQLEE) form a DNA-binding region, H-T-H motif.

It belongs to the SlyA family. Homodimer.

Functionally, transcription regulator that can specifically activate or repress expression of target genes. Regulates genes involved in production of antibiotic and exoenzyme virulence determinants in the phytopathogen. Required for the expression of the virulence protein evf during Drosophila melanogaster infection. The protein is Transcriptional regulator SlyA of Pectobacterium carotovorum subsp. carotovorum (Erwinia carotovora subsp. carotovora).